Consider the following 180-residue polypeptide: Large ribosomal subunit protein uL6 (180 aa).

Belongs to the universal ribosomal protein uL6 family. As to quaternary structure, part of the 50S ribosomal subunit.

Its function is as follows. This protein binds to the 23S rRNA, and is important in its secondary structure. It is located near the subunit interface in the base of the L7/L12 stalk, and near the tRNA binding site of the peptidyltransferase center. The protein is Large ribosomal subunit protein uL6 of Borrelia recurrentis (strain A1).